The sequence spans 433 residues: Cyclin-dependent kinase 15 (433 aa).

The tract at residues 46–83 is disordered; it reads ASSSTASFHPRGLEAASAQKLKSKRPRSNSDSFQEENL. Residues 52–336 enclose the Protein kinase domain; the sequence is SFHPRGLEAA…SKLPNYNPEW (285 aa). Residues 58-66 and E81 each bind ATP; that span reads LEAASAQKL. Catalysis depends on T173, which acts as the Proton acceptor.

It belongs to the protein kinase superfamily. CMGC Ser/Thr protein kinase family. CDC2/CDKX subfamily. Mg(2+) is required as a cofactor.

It catalyses the reaction L-seryl-[protein] + ATP = O-phospho-L-seryl-[protein] + ADP + H(+). It carries out the reaction L-threonyl-[protein] + ATP = O-phospho-L-threonyl-[protein] + ADP + H(+). In terms of biological role, serine/threonine-protein kinase that acts like an antiapoptotic protein that counters TRAIL/TNFSF10-induced apoptosis by inducing phosphorylation of BIRC5 at 'Thr-34'. The polypeptide is Cyclin-dependent kinase 15 (Cdk15) (Mus musculus (Mouse)).